The sequence spans 390 residues: 3-ketoacyl-CoA thiolase (390 aa).

The active-site Acyl-thioester intermediate is C95. Active-site proton acceptor residues include H346 and C376.

The protein belongs to the thiolase-like superfamily. Thiolase family. Heterotetramer of two alpha chains (FadB) and two beta chains (FadA).

The protein localises to the cytoplasm. It catalyses the reaction an acyl-CoA + acetyl-CoA = a 3-oxoacyl-CoA + CoA. It functions in the pathway lipid metabolism; fatty acid beta-oxidation. In terms of biological role, catalyzes the final step of fatty acid oxidation in which acetyl-CoA is released and the CoA ester of a fatty acid two carbons shorter is formed. This chain is 3-ketoacyl-CoA thiolase, found in Acinetobacter baylyi (strain ATCC 33305 / BD413 / ADP1).